Here is a 497-residue protein sequence, read N- to C-terminus: Low affinity K(+) transporter 1 (497 aa).

The Extracellular portion of the chain corresponds to 1 to 29; that stretch reads MFNHDWKYSINSKTFADLNIELFRNHKFK. Residues 30–50 traverse the membrane as a helical segment; sequence TVLNYIIGVVGWNGLKLALFV. Residues 51–80 lie on the Cytoplasmic side of the membrane; it reads SDIYTCIKLLAFNSWSNNIIKPYLPFKISK. The helical transmembrane segment at 81 to 101 threads the bilayer; that stretch reads WLFSGCILASIVLLIWEAIAG. Topologically, residues 102–216 are extracellular; sequence MRIYKTGNIS…TNHEEAVILS (115 aa). The chain crosses the membrane as a helical span at residues 217–237; sequence LMLFSFIIWALFVFKFLLAVI. The Cytoplasmic portion of the chain corresponds to 238–497; the sequence is CSIFVYYKII…EDEDRTYNYT (260 aa). Phosphoserine occurs at positions 291 and 319. Residues 420–469 form a disordered region; the sequence is EFHGPLDSMPNTTNNIRNFNSNSSRPRPPPLQTKSSINSKADSNDNGRIY. A compositionally biased stretch (low complexity) spans 429–444; the sequence is PNTTNNIRNFNSNSSR. Over residues 451–465 the composition is skewed to polar residues; that stretch reads QTKSSINSKADSNDN.

The protein belongs to the KCH1 low affinity K(+) transporter family.

It localises to the vacuole membrane. The protein resides in the cell membrane. The enzyme catalyses K(+)(in) = K(+)(out). Functionally, low affinity potassium transporter that, with PRM6/KCH2, participates in high-affinity Ca(2+) influx system (HACS) activation during the response to mating pheromone. Directly promotes K(+) influx and HACS may electrochemically respond to this K(+) influx. KCH1 and KCH2 act at the apex of the calcium signaling pathway that is used for survival during prolonged exposures to mating pheromones. This chain is Low affinity K(+) transporter 1, found in Saccharomyces cerevisiae (strain ATCC 204508 / S288c) (Baker's yeast).